The sequence spans 928 residues: Protein NETWORKED 2B (928 aa).

One can recognise an NAB domain in the interval 10 to 90; it reads YSWWWASHIR…ERYDHLSTEL (81 aa). Residues 108–144 are disordered; it reads PLVDDDDDDDDDNPKKPPKHLHLIPSGTNIPQVPEVP. Acidic residues predominate over residues 110–119; the sequence is VDDDDDDDDD. 2 coiled-coil regions span residues 207–309 and 360–445; these read SYEQ…AKKA and ALLK…VKMD. 2 disordered regions span residues 447–472 and 489–529; these read DVEGDGLNPEDIQEEDTVEDSDSISN and KQSR…EERR. Residues 457 to 468 show a composition bias toward acidic residues; that stretch reads DIQEEDTVEDSD. The segment covering 489 to 506 has biased composition (basic and acidic residues); that stretch reads KQSRDQESMQEEKSETRD. Residues 547-574 are a coiled coil; the sequence is LLDEYSSVLRDYREVKRKLSEVEKKNRD. Positions 620-651 are disordered; the sequence is AESVSISHSSNSSFSMPPLPQRGDLKRASEQE. The span at 622–634 shows a compositional bias: low complexity; sequence SVSISHSSNSSFS. The span at 642–651 shows a compositional bias: basic and acidic residues; it reads GDLKRASEQE.

Belongs to the NET family.

In terms of biological role, plant-specific actin binding protein. May be part of a membrane-cytoskeletal adapter complex. The protein is Protein NETWORKED 2B of Arabidopsis thaliana (Mouse-ear cress).